The chain runs to 396 residues: Phosphoglycerate kinase (396 aa).

Substrate is bound by residues 21–23 (DFN), Arg-36, 59–62 (HLGR), Arg-118, and Arg-151. ATP is bound by residues Lys-201, Gly-292, Glu-323, and 349–352 (GGDS).

The protein belongs to the phosphoglycerate kinase family. In terms of assembly, monomer.

It localises to the cytoplasm. It catalyses the reaction (2R)-3-phosphoglycerate + ATP = (2R)-3-phospho-glyceroyl phosphate + ADP. It functions in the pathway carbohydrate degradation; glycolysis; pyruvate from D-glyceraldehyde 3-phosphate: step 2/5. The polypeptide is Phosphoglycerate kinase (Leptospira interrogans serogroup Icterohaemorrhagiae serovar Lai (strain 56601)).